The primary structure comprises 225 residues: PKHD-type hydroxylase Smal_0990 (225 aa).

Residues 78–177 (KYLPPRFNRY…RVASFFWVQS (100 aa)) enclose the Fe2OG dioxygenase domain. Residues His96, Asp98, and His158 each coordinate Fe cation. Arg168 is a 2-oxoglutarate binding site.

Fe(2+) serves as cofactor. Requires L-ascorbate as cofactor.

The sequence is that of PKHD-type hydroxylase Smal_0990 from Stenotrophomonas maltophilia (strain R551-3).